Reading from the N-terminus, the 225-residue chain is MIVYSFPTLYEEIVKARINRFTVVTESEKICHLHDPGRLKELIYPGNKILIRNVNGKRKTNCQVTAAWSGKEWVVTDSSIHNEIARRFLPSDAKSEVTVGKSRIDFAFDNTYVEVKGCTLARDGIALFPDAPTKRGKRHLDELIELRRNGYSVLLMILVFRTDVVCFSPNFDTDRDFSNTFIKALKEGVNVEVKVFQLDKENIVYKGEIPVCHQILEKSTNFSLP.

The protein belongs to the SfsA family.

In Sulfurisphaera tokodaii (strain DSM 16993 / JCM 10545 / NBRC 100140 / 7) (Sulfolobus tokodaii), this protein is Sugar fermentation stimulation protein homolog.